We begin with the raw amino-acid sequence, 66 residues long: U10-theraphotoxin-Cg1a 3 (66 aa).

A signal peptide spans 1–21 (MKTSVLFVIFGLALLFCLSFA). Positions 22 to 29 (DELEDTGR) are excised as a propeptide. Disulfide bonds link C31–C46, C38–C51, and C45–C58.

The protein belongs to the neurotoxin 10 (Hwtx-1) family. 29 (Jztx-13) subfamily. Expressed by the venom gland.

It is found in the secreted. In terms of biological role, probable ion channel inhibitor. This is U10-theraphotoxin-Cg1a 3 from Chilobrachys guangxiensis (Chinese earth tiger tarantula).